Reading from the N-terminus, the 347-residue chain is MTDTLASLAYLAGKPTAQAKIKAKPEHFQVREDLGFEFTGSGEHLMVRIRKTGENTSFVANELAKACGVKSKDVSWAGLKDRHAVTEQWLSVHLPKAETPDFSAFLAQYPSIEILTTARHNKKLRPGDLVGNDFVVTLSEVSDVDDVLKRLETVAKLGVPNYFGNQRFGNNGNNLQEAKRWGRDNVRSRNQNQRSLYLSAARSWIFNLIVSARLEQSLFDKVLLGDILFKGDEQLLVSAENHADLQSQYDAGDLVISGALAGDNALPTQDDALALEQVFLDAEPDLMALIRGNRMRHDRRAIALKPANLSWQVDGNNIILTFSLDAGSFATSIIRELVQEIAFEREF.

The active-site Nucleophile is the Asp-81. Residues 158–304 (GVPNYFGNQR…MRHDRRAIAL (147 aa)) form the TRUD domain.

The protein belongs to the pseudouridine synthase TruD family.

It catalyses the reaction uridine(13) in tRNA = pseudouridine(13) in tRNA. Functionally, responsible for synthesis of pseudouridine from uracil-13 in transfer RNAs. This is tRNA pseudouridine synthase D from Vibrio vulnificus (strain CMCP6).